Reading from the N-terminus, the 492-residue chain is N-succinylglutamate 5-semialdehyde dehydrogenase (492 aa).

Residue G220–G225 coordinates NAD(+). Catalysis depends on residues E243 and C277.

The protein belongs to the aldehyde dehydrogenase family. AstD subfamily.

It carries out the reaction N-succinyl-L-glutamate 5-semialdehyde + NAD(+) + H2O = N-succinyl-L-glutamate + NADH + 2 H(+). The protein operates within amino-acid degradation; L-arginine degradation via AST pathway; L-glutamate and succinate from L-arginine: step 4/5. Catalyzes the NAD-dependent reduction of succinylglutamate semialdehyde into succinylglutamate. This Salmonella typhi protein is N-succinylglutamate 5-semialdehyde dehydrogenase.